Reading from the N-terminus, the 185-residue chain is Ribosome-recycling factor (185 aa).

The protein belongs to the RRF family.

It is found in the cytoplasm. Its function is as follows. Responsible for the release of ribosomes from messenger RNA at the termination of protein biosynthesis. May increase the efficiency of translation by recycling ribosomes from one round of translation to another. This Rhodococcus erythropolis (strain PR4 / NBRC 100887) protein is Ribosome-recycling factor.